The following is a 587-amino-acid chain: Pentatricopeptide repeat-containing protein OGR1, mitochondrial (587 aa).

A mitochondrion-targeting transit peptide spans 1–30; the sequence is MSVSAAARHLESLLPRLASLRHYLQFHARL. PPR repeat units lie at residues 145 to 179, 200 to 203, 217 to 251, 252 to 286, 287 to 315, 319 to 349, 351 to 381, and 383 to 417; these read DVRL…DVAT, FHRL, NEVT…GLDR, NVRV…DQTL, VSYN…MPTR, DGVT…MRVA, NMKH…MPFP, and DIVL…GSNV. Residues 386–461 are type E motif; sequence LWQTLLGAAK…VPGFSYTEID (76 aa). A type E(+) motif region spans residues 462–492; sequence GVMHKFINGDKEHPRWQEIYRALEDIVSRIS. The segment at 493-587 is type DYW motif; the sequence is ELGYEPETSN…DGQCSCRDYW (95 aa).

It is found in the mitochondrion. Functionally, involved in multiple sites RNA editing events in mitochondria. Essential for C-to-U RNA editing at seven specific sites of nad2, nad4, cox2, cox3 and ccmC transcripts, all coding for proteins involved in the mitochondrial electron transport chain coupled to ATP generation. Required for normal growth and development. The polypeptide is Pentatricopeptide repeat-containing protein OGR1, mitochondrial (Oryza sativa subsp. japonica (Rice)).